Consider the following 771-residue polypeptide: Glucocorticoid receptor (771 aa).

A modulating region spans residues 1–415 (MDLKESVTSS…STTTGPPPKL (415 aa)). Position 8 is a phosphothreonine (Thr8). Residue Arg22 is modified to Omega-N-methylarginine. 5 positions are modified to phosphoserine: Ser44, Ser133, Ser199, Ser207, and Ser222. A compositionally biased stretch (polar residues) spans 129-172 (SRSTSVPENPKNSASAVSGTPTEEFPKTQSDLSSEQENLKSQAG). Positions 129-184 (SRSTSVPENPKNSASAVSGTPTEEFPKTQSDLSSEQENLKSQAGTNGGNVKFPPDQ) are disordered. Lys254 participates in a covalent cross-link: Glycyl lysine isopeptide (Lys-Gly) (interchain with G-Cter in SUMO2). Ser263 is subject to Phosphoserine. Residues Lys273 and Lys289 each participate in a glycyl lysine isopeptide (Lys-Gly) (interchain with G-Cter in SUMO); alternate cross-link. Glycyl lysine isopeptide (Lys-Gly) (interchain with G-Cter in SUMO2); alternate cross-links involve residues Lys273 and Lys289. 2 positions are modified to phosphoserine: Ser303 and Ser400. A disordered region spans residues 390–411 (SSPGLRPDVSSPPSSSSTTTGP). Positions 400-409 (SPPSSSSTTT) are enriched in low complexity. Lys414 is covalently cross-linked (Glycyl lysine isopeptide (Lys-Gly) (interchain with G-Cter in ubiquitin)). 2 consecutive NR C4-type zinc fingers follow at residues 416–436 (CLVCSDELSGCHYGVLTCGSC) and 452–476 (CAGRNDCIIDKIRRENCPACRYRKC). Residues 416 to 481 (CLVCSDELSG…RYRKCLQAGM (66 aa)) constitute a DNA-binding region (nuclear receptor). N6-acetyllysine is present on residues Lys475, Lys487, Lys489, and Lys490. The interaction with CLOCK stretch occupies residues 480 to 771 (GMNLQARKTK…DIKKLLFHQK (292 aa)). The tract at residues 482-517 (NLQARKTKKKIKGIQQATTGVSQNTSENPNKTIVPA) is hinge. The NR LBD domain maps to 518-752 (TLPQLTPTLV…FPEMLAEIIT (235 aa)). Residues 526–691 (LVSLLEVIEP…EIRMTYIKEL (166 aa)) form an interaction with CRY1 region. Residue Lys697 forms a Glycyl lysine isopeptide (Lys-Gly) (interchain with G-Cter in SUMO) linkage.

The protein belongs to the nuclear hormone receptor family. NR3 subfamily. In terms of assembly, heteromultimeric cytoplasmic complex with HSP90AA1, HSPA1A/HSPA1B, and FKBP5 or another immunophilin such as PPID, STIP1, or the immunophilin homolog PPP5C. Upon ligand binding FKBP5 dissociates from the complex and FKBP4 takes its place, thereby linking the complex to dynein and mediating transport to the nucleus, where the complex dissociates. Probably forms a complex composed of chaperones HSP90 and HSP70, co-chaperones CDC37, PPP5C, TSC1 and client protein TSC2, CDK4, AKT, RAF1 and NR3C1; this complex does not contain co-chaperones STIP1/HOP and PTGES3/p23. Directly interacts with UNC45A. Binds to DNA as a homodimer, and as heterodimer with NR3C2 or the retinoid X receptor. Binds STAT5A and STAT5B homodimers and heterodimers. Interacts with NRIP1, POU2F1, POU2F2 and TRIM28. Interacts with several coactivator complexes, including the SMARCA4 complex, CREBBP/EP300, TADA2L (Ada complex) and p160 coactivators such as NCOA2 and NCOA6. Interaction with BAG1 inhibits transactivation. Interacts with HEXIM1 and TGFB1I1. Interacts with NCOA1. Interacts with NCOA3, SMARCA4, SMARCC1, SMARCD1, and SMARCE1. Interacts with CLOCK, CRY1 and CRY2 in a ligand-dependent fashion. Interacts with CIART. Interacts with RWDD3. Interacts with UBE2I/UBC9 and this interaction is enhanced in the presence of RWDD3. Interacts with GRIP1. Interacts with NR4A3 (via nuclear receptor DNA-binding domain), represses transcription activity of NR4A3 on the POMC promoter Nur response element (NurRE). Directly interacts with PNRC2 to attract and form a complex with UPF1 and DCP1A; the interaction leads to rapid mRNA degradation. Interacts with GSK3B. Interacts with FNIP1 and FNIP2. Interacts (via C-terminus) with HNRNPU (via C-terminus). Interacts with MCM3AP. Interacts (via domain NR LBD) with HSP90AA1 and HSP90AB1. In the absence of hormonal ligand, interacts with TACC1. Interacts (via NR LBD domain) with ZNF764 (via KRAB domain); the interaction regulates transcription factor activity of NR3C1 by directing its actions toward certain biologic pathways. In terms of processing, acetylation by CLOCK reduces its binding to glucocorticoid response elements and its transcriptional activity. Post-translationally, increased proteasome-mediated degradation in response to glucocorticoids. Phosphorylated in the absence of hormone; becomes hyperphosphorylated in the presence of glucocorticoid. The Ser-199, Ser-222 and Ser-400-phosphorylated forms are mainly cytoplasmic, and the Ser-207-phosphorylated form is nuclear. Phosphorylation at Ser-207 increases transcriptional activity. Phosphorylation at Ser-199, Ser-222 and Ser-400 decreases signaling capacity. Phosphorylation at Ser-400 may protect from glucocorticoid-induced apoptosis. Phosphorylation at Ser-199 and Ser-207 is not required in regulation of chromosome segregation. May be dephosphorylated by PPP5C, attenuates NR3C1 action. In terms of processing, ubiquitinated by UBR5, leading to its degradation: UBR5 specifically recognizes and binds ligand-bound NR3C1 when it is not associated with coactivators (NCOAs). In presence of NCOAs, the UBR5-degron is not accessible, preventing its ubiquitination and degradation. Post-translationally, sumoylation at Lys-273 and Lys-289 negatively regulates its transcriptional activity. Sumoylation at Lys-697 positively regulates its transcriptional activity in the presence of RWDD3. Sumoylation at Lys-273 and Lys-289 is dispensable whereas sumoylation at Lys-697 is critical for the stimulatory effect of RWDD3 on its transcriptional activity. Heat shock increases sumoylation in a RWDD3-dependent manner.

The protein localises to the cytoplasm. It localises to the nucleus. Its subcellular location is the mitochondrion. The protein resides in the cytoskeleton. It is found in the spindle. The protein localises to the microtubule organizing center. It localises to the centrosome. Its subcellular location is the chromosome. The protein resides in the nucleoplasm. Receptor for glucocorticoids (GC). Has a dual mode of action: as a transcription factor that binds to glucocorticoid response elements (GRE), both for nuclear and mitochondrial DNA, and as a modulator of other transcription factors. Affects inflammatory responses, cellular proliferation and differentiation in target tissues. Involved in chromatin remodeling. Plays a role in rapid mRNA degradation by binding to the 5' UTR of target mRNAs and interacting with PNRC2 in a ligand-dependent manner which recruits the RNA helicase UPF1 and the mRNA-decapping enzyme DCP1A, leading to RNA decay. Could act as a coactivator for STAT5-dependent transcription upon growth hormone (GH) stimulation and could reveal an essential role of hepatic GR in the control of body growth. Mediates glucocorticoid-induced apoptosis. Promotes accurate chromosome segregation during mitosis. May act as a tumor suppressor. May play a negative role in adipogenesis through the regulation of lipolytic and antilipogenic gene expression. The protein is Glucocorticoid receptor (NR3C1) of Cavia porcellus (Guinea pig).